A 182-amino-acid polypeptide reads, in one-letter code: Orotate phosphoribosyltransferase (182 aa).

5-phospho-alpha-D-ribose 1-diphosphate is bound by residues Arg-96, Lys-97, Lys-100, His-102, and 122 to 130 (EDTSTTGGS). Residues Thr-126 and Arg-154 each contribute to the orotate site.

Belongs to the purine/pyrimidine phosphoribosyltransferase family. PyrE subfamily. In terms of assembly, homodimer. The cofactor is Mg(2+).

The catalysed reaction is orotidine 5'-phosphate + diphosphate = orotate + 5-phospho-alpha-D-ribose 1-diphosphate. The protein operates within pyrimidine metabolism; UMP biosynthesis via de novo pathway; UMP from orotate: step 1/2. Its function is as follows. Catalyzes the transfer of a ribosyl phosphate group from 5-phosphoribose 1-diphosphate to orotate, leading to the formation of orotidine monophosphate (OMP). The polypeptide is Orotate phosphoribosyltransferase (Streptomyces coelicolor (strain ATCC BAA-471 / A3(2) / M145)).